Consider the following 446-residue polypeptide: NADH oxidase (446 aa).

Residues 7-11 (GCTHA), glutamate 32, cysteine 42, valine 79, 110-113 (TTGS), lysine 132, and tyrosine 157 each bind FAD. The active-site Proton acceptor is histidine 10. Cysteine 42 functions as the Redox-active in the catalytic mechanism. The residue at position 42 (cysteine 42) is a Cysteine sulfinic acid (-SO2H). NAD(+) is bound by residues 150-165 (VVVV…LVEA), aspartate 177, tyrosine 186, and glycine 243. Residues 271–281 (TSNPDIFAAGD), leucine 298, alanine 299, and threonine 300 each bind FAD. Glycine 328 provides a ligand contact to NAD(+). Phenylalanine 424 provides a ligand contact to FAD.

This sequence belongs to the class-III pyridine nucleotide-disulfide oxidoreductase family. Homodimer. The cofactor is FAD. The N-terminus is blocked.

It carries out the reaction 2 NADH + O2 + 2 H(+) = 2 NAD(+) + 2 H2O. Functionally, catalyzes the four-electron reduction of molecular oxygen to water. The sequence is that of NADH oxidase (nox) from Enterococcus faecalis (strain ATCC 700802 / V583).